The sequence spans 215 residues: Pyridoxine/pyridoxamine 5'-phosphate oxidase (215 aa).

Substrate is bound by residues R9–Y12 and K69. Residues R64–K69, F79–S80, K86, and Q108 contribute to the FMN site. Positions 126, 130, and 134 each coordinate substrate. Residues Q143–S144 and W188 each bind FMN. Residue R194 to H196 coordinates substrate. FMN is bound at residue R198.

The protein belongs to the pyridoxamine 5'-phosphate oxidase family. Homodimer. FMN serves as cofactor.

The catalysed reaction is pyridoxamine 5'-phosphate + O2 + H2O = pyridoxal 5'-phosphate + H2O2 + NH4(+). It catalyses the reaction pyridoxine 5'-phosphate + O2 = pyridoxal 5'-phosphate + H2O2. It functions in the pathway cofactor metabolism; pyridoxal 5'-phosphate salvage; pyridoxal 5'-phosphate from pyridoxamine 5'-phosphate: step 1/1. It participates in cofactor metabolism; pyridoxal 5'-phosphate salvage; pyridoxal 5'-phosphate from pyridoxine 5'-phosphate: step 1/1. Functionally, catalyzes the oxidation of either pyridoxine 5'-phosphate (PNP) or pyridoxamine 5'-phosphate (PMP) into pyridoxal 5'-phosphate (PLP). This chain is Pyridoxine/pyridoxamine 5'-phosphate oxidase, found in Azotobacter vinelandii (strain DJ / ATCC BAA-1303).